The following is a 366-amino-acid chain: Ribosomal RNA large subunit methyltransferase M (366 aa).

S-adenosyl-L-methionine is bound by residues Ser188, 221-224 (CPGG), Asp240, Asp260, and Asp277. Lys306 (proton acceptor) is an active-site residue.

Belongs to the class I-like SAM-binding methyltransferase superfamily. RNA methyltransferase RlmE family. RlmM subfamily. As to quaternary structure, monomer.

It is found in the cytoplasm. It carries out the reaction cytidine(2498) in 23S rRNA + S-adenosyl-L-methionine = 2'-O-methylcytidine(2498) in 23S rRNA + S-adenosyl-L-homocysteine + H(+). In terms of biological role, catalyzes the 2'-O-methylation at nucleotide C2498 in 23S rRNA. This chain is Ribosomal RNA large subunit methyltransferase M, found in Photorhabdus sp. (strain Az29).